We begin with the raw amino-acid sequence, 116 residues long: MKIRKSILAGTLAIVLASPLVTNLDKNEAQASTSLPTSNEYQNEKLANELKSLLDELNVNELATGSLNTYYKRTIKISGLKAMYALKSKDFKKMSEAKYQLQKIYNEIDEALKSKY.

The first 31 residues, 1–31 (MKIRKSILAGTLAIVLASPLVTNLDKNEAQA), serve as a signal peptide directing secretion. Residues 62 to 79 (LATGSLNTYYKRTIKISG) are essential for activity.

Belongs to the SCIN family.

It is found in the secreted. Its function is as follows. Involved in countering the first line of host defense mechanisms. Efficiently inhibits opsonization, phagocytosis and killing of S.aureus by human neutrophils. Acts by binding and stabilizing human C3 convertases (C4b2a and C3bBb), leading to their inactivation. The convertases are no longer able to cleave complement C3, therefore preventing further C3b deposition on the bacterial surface and phagocytosis of the bacterium. Also prevents C5a-induced neutrophil responses. The chain is Staphylococcal complement inhibitor (scn) from Staphylococcus aureus (strain N315).